The primary structure comprises 271 residues: Autophagy-related protein 5 (271 aa).

Residue lysine 145 forms a Glycyl lysine isopeptide (Lys-Gly) (interchain with G-Cter in ATG12) linkage.

The protein belongs to the ATG5 family. As to quaternary structure, conjugated with ATG12. Interacts with ATG10. The ATG5-ATG12 conjugate forms a complex with several units of ATG16. The ATG12-ATG5 conjugate also associates with ATG3. Post-translationally, conjugated to ATG12; which is essential for autophagy. Conjugation with ATG12 involves ATG7 as an E1-like activating enzyme and ATG10 as an E2-like conjugating enzyme.

It localises to the preautophagosomal structure membrane. Functionally, involved in cytoplasm to vacuole transport (Cvt) and autophagic vesicle formation. Autophagy is essential for maintenance of amino acid levels and protein synthesis under nitrogen starvation. Required for selective autophagic degradation of the nucleus (nucleophagy). Also required for mitophagy, which eliminates defective or superfluous mitochondria in order to fulfill cellular energy requirements and prevent excess ROS production. Conjugation with ATG12, through a ubiquitin-like conjugating system involving ATG7 as an E1-like activating enzyme and ATG10 as an E2-like conjugating enzyme, is essential for its function. The ATG12-ATG5 conjugate acts as an E3-like enzyme which is required for lipidation of ATG8 and ATG8 association to the vesicle membranes. ATG12-ATG5 rearranges the ATG3 catalytic center and enhances its E2 activity. The chain is Autophagy-related protein 5 from Kluyveromyces marxianus (strain DMKU3-1042 / BCC 29191 / NBRC 104275) (Yeast).